The sequence spans 506 residues: Maturase K (506 aa).

Belongs to the intron maturase 2 family. MatK subfamily.

Its subcellular location is the plastid. The protein resides in the chloroplast. Its function is as follows. Usually encoded in the trnK tRNA gene intron. Probably assists in splicing its own and other chloroplast group II introns. The sequence is that of Maturase K from Hydrangea macrophylla (Bigleaf hydrangea).